Reading from the N-terminus, the 772-residue chain is Phenylalanine--tRNA ligase beta subunit (772 aa).

The tRNA-binding domain occupies 40 to 158 (IKPSTNLVFA…DHYKTPNQIF (119 aa)). In terms of domain architecture, B5 spans 397-468 (SVHNVIKNKI…KKISIQEIKP (72 aa)). Positions 446, 452, 455, and 456 each coordinate Mg(2+). Residues 691-772 (SMYHDVIRDI…QEVNNYLKQF (82 aa)) enclose the FDX-ACB domain.

This sequence belongs to the phenylalanyl-tRNA synthetase beta subunit family. Type 1 subfamily. As to quaternary structure, tetramer of two alpha and two beta subunits. Mg(2+) serves as cofactor.

Its subcellular location is the cytoplasm. The enzyme catalyses tRNA(Phe) + L-phenylalanine + ATP = L-phenylalanyl-tRNA(Phe) + AMP + diphosphate + H(+). The sequence is that of Phenylalanine--tRNA ligase beta subunit (pheT) from Ureaplasma parvum serovar 3 (strain ATCC 700970).